The following is a 219-amino-acid chain: Probable GTP-binding protein EngB (219 aa).

One can recognise an EngB-type G domain in the interval valine 31–proline 205. GTP-binding positions include glycine 39–serine 46, glycine 66–leucine 70, aspartate 84–glycine 87, threonine 151–aspartate 154, and phenylalanine 184–alanine 186. Positions 46 and 68 each coordinate Mg(2+).

This sequence belongs to the TRAFAC class TrmE-Era-EngA-EngB-Septin-like GTPase superfamily. EngB GTPase family. It depends on Mg(2+) as a cofactor.

Necessary for normal cell division and for the maintenance of normal septation. The protein is Probable GTP-binding protein EngB of Shewanella sp. (strain ANA-3).